The chain runs to 154 residues: Large ribosomal subunit protein uL13 (154 aa).

This sequence belongs to the universal ribosomal protein uL13 family. In terms of assembly, part of the 50S ribosomal subunit.

In terms of biological role, this protein is one of the early assembly proteins of the 50S ribosomal subunit, although it is not seen to bind rRNA by itself. It is important during the early stages of 50S assembly. The chain is Large ribosomal subunit protein uL13 from Brucella suis (strain ATCC 23445 / NCTC 10510).